We begin with the raw amino-acid sequence, 274 residues long: Penicillin-insensitive murein endopeptidase (274 aa).

Residues 1–19 form the signal peptide; it reads MKNTVIALLALLASAGSLA. Intrachain disulfides connect cysteine 44–cysteine 265, cysteine 187–cysteine 235, and cysteine 216–cysteine 223. Histidine 110, histidine 113, aspartate 120, aspartate 147, histidine 150, and histidine 211 together coordinate Zn(2+). Residues 224 to 263 form a disordered region; the sequence is EDQAPPPPGDGCGAELQSWFEPPKPGSTPPVKKTPPPLPP. Pro residues predominate over residues 245-263; sequence PPKPGSTPPVKKTPPPLPP.

The protein belongs to the peptidase M74 family. As to quaternary structure, dimer. Requires Zn(2+) as cofactor.

The protein localises to the periplasm. In terms of biological role, murein endopeptidase that cleaves the D-alanyl-meso-2,6-diamino-pimelyl amide bond that connects peptidoglycan strands. Likely plays a role in the removal of murein from the sacculus. In Klebsiella pneumoniae subsp. pneumoniae (strain ATCC 700721 / MGH 78578), this protein is Penicillin-insensitive murein endopeptidase.